Consider the following 462-residue polypeptide: Prenyltransferase phqI (462 aa).

Brevianamide F is bound at residue glutamate 101. Arginine 117, lysine 204, tyrosine 206, lysine 273, tyrosine 275, tyrosine 357, tyrosine 442, and tyrosine 446 together coordinate dimethylallyl diphosphate.

It belongs to the tryptophan dimethylallyltransferase family.

It participates in alkaloid biosynthesis. In terms of biological role, prenyltransferase; part of the gene cluster that mediates the biosynthesis of paraherquamide, a fungal indole alkaloid that belongs to a family of natural products containing a characteristic bicyclo[2.2.2]diazaoctane core. The first steps in the biosynthesis of paraherquamide is the production of the beta-methyl-proline precursor from L-isoleucine. They require oxidation of a terminally hydroxylated L-isoleucine to the corresponding aldehyde by enzymes which have still to be identified. Spontaneous cyclization and dehydration would yield the 4-methyl pyrolline-5-carboxylic acid, which is then reduced by the pyrroline-5-carboxylate reductase phqD leading to the beta-methyl-proline precursor. The next step of paraherquamide biosynthesis involves coupling of beta-methyl-proline and L-tryptophan by the bimodular NRPS phqB, to produce a monooxopiperazine intermediate. The reductase (R) domain of phqB utilizes NADPH for hydride transfer to reduce the thioester bond of the T domain-tethered linear dipeptide to a hemithioaminal intermediate, which spontaneously cleaves the C-S bond to release the aldehyde product. This compound undergoes spontaneous cyclization and dehydration to give a dienamine which is reverse prenylated at C-2 by the reverse prenyltransferase phqJ. The other prenyltransferase present in the cluster, phqI may be a redundant gene in the pathway. During biosynthetic assembly, the key step to produce the polycyclic core is catalyzed by the bifunctional reductase and intramolecular [4+2] Diels-Alderase, phqE, resulting in formation of the [2.2.2] diazaoctane intermediate preparaherquamide. Following formation of preparaherquamide, an indole 2,3-epoxidation-initiated pinacol-like rearrangement is catalyzed by the phqK FAD-dependent monooxygenase. The prenyltransferase phqA, the cytochrome P450 monooxygenase phqL, and the FAD-linked oxidoreductase phqH (or the cytochrome P450 monooxygenase phqM), are proposed to be involved in the formation of the pyran ring. The FAD-dependent monooxygenase phqK is likely responsible for generation of the spiro-oxindole, and the N-methylation is likely mediated by the phqN methyltransferase leading to the isolable natural product paraherquamide F. However, the order of these biosynthetic steps has still to be determined. In late-stage paraherquamide biosynthesis, the third P450 monooxygenase, phqO, is probably responsible for the C-14 hydroxylation, transforming paraherquamide F to paraherquamide G, and paraherquamide E to the final product paraherquamide A. The expansion from the 6-membered ring pyran (in paraherquamides F and G) to the 7-membered dioxepin ring (in paraherquamides A and E) represents a poorly understood but intriguing process that probably involves the 2-oxoglutarate-dependent dioxygenase phqC. Finally, the remaining members of the paraherquamide cluster, including phqI as well as phqM (or phqH), do not have a clearly prescribed role and appear to be redundant. The protein is Prenyltransferase phqI of Penicillium fellutanum.